The primary structure comprises 274 residues: Large ribosomal subunit protein uL2 (274 aa).

2 disordered regions span residues 28-54 (KPFA…TRHI) and 221-274 (RGTA…RSKK). The segment covering 39–49 (KTGGRNNNGRI) has biased composition (polar residues).

It belongs to the universal ribosomal protein uL2 family. In terms of assembly, part of the 50S ribosomal subunit. Forms a bridge to the 30S subunit in the 70S ribosome.

In terms of biological role, one of the primary rRNA binding proteins. Required for association of the 30S and 50S subunits to form the 70S ribosome, for tRNA binding and peptide bond formation. It has been suggested to have peptidyltransferase activity; this is somewhat controversial. Makes several contacts with the 16S rRNA in the 70S ribosome. This chain is Large ribosomal subunit protein uL2, found in Edwardsiella ictaluri (strain 93-146).